Reading from the N-terminus, the 629-residue chain is Bifunctional protein ArgHA (629 aa).

The interval 1-499 (MALWGGRFSQ…NLPRSRSDLV (499 aa)) is argininosuccinate lyase. Residues 464-598 (ISIRAARLTD…EKVLKDCDMC (135 aa)) enclose the N-acetyltransferase domain. The segment at 500-629 (KAVGTFAVTE…INLKAEKLAS (130 aa)) is amino-acid acetyltransferase.

This sequence in the N-terminal section; belongs to the lyase 1 family. Argininosuccinate lyase subfamily. In the C-terminal section; belongs to the acetyltransferase family. ArgA subfamily.

The protein resides in the cytoplasm. The enzyme catalyses 2-(N(omega)-L-arginino)succinate = fumarate + L-arginine. It carries out the reaction L-glutamate + acetyl-CoA = N-acetyl-L-glutamate + CoA + H(+). It functions in the pathway amino-acid biosynthesis; L-arginine biosynthesis; N(2)-acetyl-L-ornithine from L-glutamate: step 1/4. Its pathway is amino-acid biosynthesis; L-arginine biosynthesis; L-arginine from L-ornithine and carbamoyl phosphate: step 3/3. In Moritella abyssi, this protein is Bifunctional protein ArgHA (argHA).